The chain runs to 207 residues: Large ribosomal subunit protein uL3 (207 aa).

A disordered region spans residues 129–152; the sequence is AGGPAGHGSRFQRHPGSIGSNTTP.

It belongs to the universal ribosomal protein uL3 family. In terms of assembly, part of the 50S ribosomal subunit. Forms a cluster with proteins L14 and L19.

In terms of biological role, one of the primary rRNA binding proteins, it binds directly near the 3'-end of the 23S rRNA, where it nucleates assembly of the 50S subunit. This chain is Large ribosomal subunit protein uL3, found in Leptospira biflexa serovar Patoc (strain Patoc 1 / ATCC 23582 / Paris).